A 359-amino-acid polypeptide reads, in one-letter code: Outer membrane protein P2 (359 aa).

The N-terminal stretch at 1 to 20 is a signal peptide; the sequence is MKKTLAALIVGAFAASAANA.

This sequence belongs to the Gram-negative porin family. In terms of assembly, homotrimer.

Its subcellular location is the cell outer membrane. Forms pores that allow passive diffusion of small molecules across the outer membrane. This Haemophilus influenzae (strain ATCC 51907 / DSM 11121 / KW20 / Rd) protein is Outer membrane protein P2 (ompP2).